The following is a 1239-amino-acid chain: Anion exchange protein 2 (1239 aa).

A disordered region spans residues 1–237 (MSSAPRRPAK…HRSYNLQERR (237 aa)). The Cytoplasmic segment spans residues 1–706 (MSSAPRRPAK…DFRDALDPQC (706 aa)). Basic and acidic residues-rich tracts occupy residues 37-49 (ELHR…RFEE) and 58-75 (GGEE…EYHR). 2 stretches are compositionally biased toward basic residues: residues 76–85 (QSSHHIHHPL) and 94–110 (RRRK…RRRP). Phosphoserine is present on residues S113, S132, S144, S170, and S172. Over residues 120 to 133 (TIEEGEEDEDEASE) the composition is skewed to acidic residues. The segment covering 141-155 (TQPSPVSTPSSVQFF) has biased composition (low complexity). A compositionally biased stretch (low complexity) spans 189–207 (GAQAGTQVEEAEAVAVASG). The span at 208 to 217 (TAGGDDGGAS) shows a compositional bias: gly residues. S241 is modified (phosphoserine). Phosphothreonine is present on T255. Residue K272 is modified to N6-methyllysine. The interval 285–318 (HLVRKNAKGSTQSGREGREPGPTPRARPRAPHKP) is disordered. S441 carries the phosphoserine modification. A disordered region spans residues 447 to 468 (SLLGHHHGQGAESDPHVTEPLI). 2 membrane (anion exchange) regions span residues 706 to 1239 (CLAA…PMPV) and 708 to 1239 (AAVI…PMPV). The next 4 membrane-spanning stretches (helical) occupy residues 707 to 727 (LAAV…FGGL), 752 to 772 (FCLL…LLVF), 794 to 814 (IGFW…SFLV), and 824 to 844 (IFAF…LVKI). Over 845-895 (FQEHPLHGCSASNSSEVDGGENMTWAVARPTLGPGNRSLAGQSGQGKPRGQ) the chain is Extracellular. 3 N-linked (GlcNAc...) asparagine glycosylation sites follow: N857, N866, and N880. A helical membrane pass occupies residues 896-916 (PNTALLSLVLMAGTFFIAFFL). Over 917-931 (RKFKNSRFFPGRIRR) the chain is Cytoplasmic. 5 consecutive transmembrane segments (helical) span residues 932–952 (VIGD…DYSI), 987–1007 (FPVW…ILIF), 1034–1054 (LLLI…WLAA), 1088–1108 (RVTG…GDLL), and 1111–1131 (IPLA…LNGI). C1171 carries the S-palmitoyl cysteine lipid modification. The chain crosses the membrane as a helical span at residues 1172–1192 (LALLWAVMSTAASLAFPFILI).

Belongs to the anion exchanger (TC 2.A.31) family.

It is found in the apical cell membrane. It localises to the basolateral cell membrane. It catalyses the reaction hydrogencarbonate(in) + chloride(out) = hydrogencarbonate(out) + chloride(in). Functionally, sodium-independent anion exchanger which mediates the electroneutral exchange of chloride for bicarbonate ions across the cell membrane. Plays an important role in osteoclast differentiation and function. Regulates bone resorption and calpain-dependent actin cytoskeleton organization in osteoclasts via anion exchange-dependent control of pH. Essential for intracellular pH regulation in CD8(+) T-cells upon CD3 stimulation, modulating CD8(+) T-cell response. The chain is Anion exchange protein 2 (SLC4A2) from Pongo abelii (Sumatran orangutan).